Consider the following 450-residue polypeptide: Interferon-induced protein 75 (450 aa).

Residues 1–108 (MFTLTKALEK…IFRSFRNVGY (108 aa)) form the HSR domain. Disordered stretches follow at residues 131-156 (CSLQ…APRV) and 170-225 (LDEQ…VKDD). A compositionally biased stretch (low complexity) spans 143–154 (QLSLPSHLSSAP). Phosphoserine occurs at positions 175 and 177. Over residues 197-212 (SRDHQRKDKEDSREMP) the composition is skewed to basic and acidic residues. Position 226 is a phosphoserine (Ser-226). Disordered stretches follow at residues 238 to 283 (VLCT…HGVQ) and 318 to 360 (AQTS…KNDA). Positions 245 to 267 (KKARRKKRLNWSNSKRGRQKKKP) are enriched in basic residues. A Nuclear localization signal motif is present at residues 251–266 (KRLNWSNSKRGRQKKK). Residues 343–353 (TSTAGKTTQVP) show a composition bias toward polar residues. The region spanning 358 to 439 (NDAVDFLSPT…RQLEQKGLLF (82 aa)) is the SAND domain.

The protein resides in the nucleus. The chain is Interferon-induced protein 75 (Ifi75) from Mus caroli (Ryukyu mouse).